Reading from the N-terminus, the 496-residue chain is Cytochrome P450 monooxygenase claT (496 aa).

Residues 2 to 22 (LSLIVEATLLLVVLVLSAHYV) traverse the membrane as a helical segment. Cys-423 serves as a coordination point for heme.

Belongs to the cytochrome P450 family. The cofactor is heme.

The protein localises to the membrane. It carries out the reaction wigandol + 4 reduced [NADPH--hemoprotein reductase] + 4 O2 = arnebinol A + 4 oxidized [NADPH--hemoprotein reductase] + 6 H2O + 4 H(+). It catalyses the reaction arnebinol A + reduced [NADPH--hemoprotein reductase] + O2 = clavilactone A + oxidized [NADPH--hemoprotein reductase] + H2O + H(+). The catalysed reaction is (2E)-geranylhydroquinone + reduced [NADPH--hemoprotein reductase] + O2 = isoalliodorol + oxidized [NADPH--hemoprotein reductase] + H2O + H(+). Its pathway is secondary metabolite biosynthesis; terpenoid biosynthesis. Its function is as follows. Cytochrome P450 monooxygenase; part of the gene cluster that mediates the biosynthesis of clavilactone A, a meroterpenoid that features a unique benzo-fused ten-membered carbocyclic ring unit with an alpha,beta-epoxy-gamma-lactone moiety, forming an intriguing 10/5/3 tricyclic nested skeleton. ClaR, ClaS and ClaT are sufficient to produce clavilactone A. Within the pathway, claT acts as a multifunctional cytochrome P450 monooxygenase that catalyzes a ten-electron oxidation to accomplish the biosynthesis of the 10/5/3 tricyclic nested skeleton in clavilactones. The biosynthesis begins with the prenyltransferase claS that transfers geranyl pyrophosphate (GPP) to hydroquinone to produces geranylhydroquinone. The cytochrome P450 monooxygenase claR then catalyzes the diradical coupling reaction between the intramolecular hydroquinone and allyl moieties to form the benzo-fused ten-membered carbocyclic ring unit of wigantol. Finally the cytochrome P450 monooxygenase claT exquisitely and stereoselectively assembles the alpha,beta-epoxy-gamma-lactone moiety, producing clavilactone A via arnebinol A. The chain is Cytochrome P450 monooxygenase claT from Ampulloclitocybe clavipes (Club foot).